The sequence spans 340 residues: Glycerol-3-phosphate dehydrogenase [NAD(P)+] (340 aa).

NADPH-binding residues include Ser-13, Trp-14, and Lys-108. 3 residues coordinate sn-glycerol 3-phosphate: Lys-108, Gly-139, and Ser-141. Ala-143 lines the NADPH pocket. The sn-glycerol 3-phosphate site is built by Lys-194, Asp-247, Ser-257, Arg-258, and Asn-259. Lys-194 serves as the catalytic Proton acceptor. An NADPH-binding site is contributed by Arg-258. The NADPH site is built by Val-282 and Glu-284.

This sequence belongs to the NAD-dependent glycerol-3-phosphate dehydrogenase family.

Its subcellular location is the cytoplasm. The catalysed reaction is sn-glycerol 3-phosphate + NAD(+) = dihydroxyacetone phosphate + NADH + H(+). It catalyses the reaction sn-glycerol 3-phosphate + NADP(+) = dihydroxyacetone phosphate + NADPH + H(+). It functions in the pathway membrane lipid metabolism; glycerophospholipid metabolism. Catalyzes the reduction of the glycolytic intermediate dihydroxyacetone phosphate (DHAP) to sn-glycerol 3-phosphate (G3P), the key precursor for phospholipid synthesis. In Streptococcus thermophilus (strain ATCC BAA-491 / LMD-9), this protein is Glycerol-3-phosphate dehydrogenase [NAD(P)+].